A 437-amino-acid chain; its full sequence is Nuclear distribution protein PAC1 (437 aa).

The stretch at 64–94 forms a coiled coil; sequence LSVIRLQRKVMDLETRLEAAEREASSTHKAN. 7 WD repeats span residues 114–153, 156–217, 221–260, 263–301, 304–356, 358–397, and 401–437; these read LHKQ…IETT, AHTR…ANVK, GHDH…CVRT, GHTD…GKMT, GHEH…LLIL, GHDN…RCIR, and AHGH…KVWQ. The interval 165 to 186 is disordered; it reads DFSQPDTGASRDKSHDKPRADV. A compositionally biased stretch (basic and acidic residues) spans 173 to 186; that stretch reads ASRDKSHDKPRADV.

Belongs to the WD repeat LIS1/nudF family. As to quaternary structure, self-associates. Interacts with NDL1 and dynein.

The protein localises to the cytoplasm. The protein resides in the cytoskeleton. Its subcellular location is the spindle pole. In terms of biological role, positively regulates the activity of the minus-end directed microtubule motor protein dynein. Plays a central role in positioning the mitotic spindle at the bud neck during cell division. Targets cytoplasmic dynein to microtubule plus ends, thereby promoting dynein-mediated microtubule sliding along the bud cortex and consequently the movement of the mitotic spindle to the bud neck. The chain is Nuclear distribution protein PAC1 from Yarrowia lipolytica (strain CLIB 122 / E 150) (Yeast).